We begin with the raw amino-acid sequence, 1069 residues long: Regulator of nonsense transcripts 1 (1069 aa).

Positions Met-1–His-86 are disordered. Over residues Ile-28–Ala-50 the composition is skewed to polar residues. Positions Thr-51–Leu-65 are enriched in low complexity. Basic and acidic residues predominate over residues Ser-77–His-86. Residues Glu-87–His-244 enclose the Upf1 CH-rich domain. Cys-95, Cys-98, Cys-109, Cys-112, Cys-117, His-127, His-131, His-137, Cys-155, Cys-158, Cys-181, and Cys-185 together coordinate Zn(2+). The interval Cys-95 to His-127 is C3H. The CC/SHH/C stretch occupies residues Cys-109–His-137. The segment at Cys-155–Cys-185 is C4. Residues Gln-450, Gly-467 to Thr-474, Gln-639, Tyr-676, and Glu-807 each bind ATP. The segment at Ala-966 to Cys-1069 is disordered. Residues Ser-991–Tyr-1013 are compositionally biased toward low complexity.

It belongs to the DNA2/NAM7 helicase family. In terms of processing, phosphorylated probably by smg-1. Smg-3 and smg-4 are required for phosphorylation.

The protein localises to the cytoplasm. It carries out the reaction ATP + H2O = ADP + phosphate + H(+). Functionally, RNA-dependent helicase required for nonsense-mediated decay (NMD) of aberrant mRNAs containing premature stop codons and modulates the expression level of normal mRNAs. Is recruited to mRNAs upon translation termination and undergoes a cycle of phosphorylation and dephosphorylation; its phosphorylation appears to be a key step in NMD. The formation of an smg-2-3-4 surveillance complex is believed to activate NMD. In Caenorhabditis elegans, this protein is Regulator of nonsense transcripts 1 (smg-2).